Consider the following 203-residue polypeptide: MNRVILLLSVMCVGVSSQPITENQRLFSIAVGRVQYLHLVAKKLFSEFENSQLEDQHPLNKIFLQDFCHSDYFLSPIDKHETQRSSVLKLLSISYRLIECWEFSSRFLVAGFAERAQVTSKLSELKTGLMKLIEANQDGAGGFSESSVIQLTPYGNYYQSVGVDESFRLNYELFACFKKDMHKVETYLTVAKCRLSPEANCTL.

The first 17 residues, 1 to 17 (MNRVILLLSVMCVGVSS), serve as a signal peptide directing secretion. Gln-18 is modified (pyrrolidone carboxylic acid). 2 disulfides stabilise this stretch: Cys-68/Cys-176 and Cys-193/Cys-201.

Belongs to the somatotropin/prolactin family.

The protein localises to the secreted. Growth hormone plays an important role in growth control and is involved in the regulation of several anabolic processes. Implicated as an osmoregulatory substance important for seawater adaptation. In Verasper variegatus (Spotted flounder), this protein is Somatotropin (gh).